A 205-amino-acid chain; its full sequence is Coatomer subunit zeta-2 (205 aa).

The span at 1–12 shows a compositional bias: basic and acidic residues; that stretch reads MQRPEAWPRPHP. The tract at residues 1–33 is disordered; sequence MQRPEAWPRPHPGEGASAAQAGGAAPPTRATEQ. Residues 13–30 show a composition bias toward low complexity; it reads GEGASAAQAGGAAPPTRA.

This sequence belongs to the adaptor complexes small subunit family. In terms of assembly, oligomeric complex.

The protein localises to the cytoplasm. Its subcellular location is the cytosol. It localises to the endoplasmic reticulum-Golgi intermediate compartment membrane. It is found in the golgi apparatus membrane. The protein resides in the cytoplasmic vesicle. The protein localises to the COPI-coated vesicle membrane. The coatomer is a cytosolic protein complex that binds to dilysine motifs and reversibly associates with Golgi non-clathrin-coated vesicles, which further mediate biosynthetic protein transport from the ER, via the Golgi up to the trans Golgi network. Coatomer complex is required for budding from Golgi membranes, and is essential for the retrograde Golgi-to-ER transport of dilysine-tagged proteins. The zeta subunit may be involved in regulating the coat assembly and, hence, the rate of biosynthetic protein transport due to its association-dissociation properties with the coatomer complex. The sequence is that of Coatomer subunit zeta-2 (Copz2) from Mus musculus (Mouse).